The sequence spans 163 residues: Neurotrophin-3 (163 aa).

The N-terminal stretch at 1–3 is a signal peptide; the sequence is IQS. The propeptide occupies 4–119; sequence TSMDQGILTE…ALNRTSRRKR (116 aa). Disordered stretches follow at residues 38-60 and 90-131; these read ARTKDGTQTTVKKSEAEADATAS and LLSE…YSVC. Residue N112 is glycosylated (N-linked (GlcNAc...) asparagine).

The protein belongs to the NGF-beta family.

Its subcellular location is the secreted. Its function is as follows. Seems to promote the survival of visceral and proprioceptive sensory neurons. The polypeptide is Neurotrophin-3 (NTF3) (Eunectes notaeus (Yellow anaconda)).